Reading from the N-terminus, the 231-residue chain is ATP-dependent dethiobiotin synthetase BioD (231 aa).

ATP is bound at residue 12-17; the sequence is EVGKTV. Thr-16 is a binding site for Mg(2+). Residue Lys-37 is part of the active site. Ser-41 serves as a coordination point for substrate. ATP-binding positions include Asp-51, 112 to 115, and 202 to 204; these read EGAG and PKL. Mg(2+) is bound by residues Asp-51 and Glu-112.

Belongs to the dethiobiotin synthetase family. In terms of assembly, homodimer. Mg(2+) is required as a cofactor.

The protein localises to the cytoplasm. It carries out the reaction (7R,8S)-7,8-diammoniononanoate + CO2 + ATP = (4R,5S)-dethiobiotin + ADP + phosphate + 3 H(+). It participates in cofactor biosynthesis; biotin biosynthesis; biotin from 7,8-diaminononanoate: step 1/2. Functionally, catalyzes a mechanistically unusual reaction, the ATP-dependent insertion of CO2 between the N7 and N8 nitrogen atoms of 7,8-diaminopelargonic acid (DAPA, also called 7,8-diammoniononanoate) to form a ureido ring. The chain is ATP-dependent dethiobiotin synthetase BioD from Bacillus subtilis subsp. natto.